The following is a 296-amino-acid chain: Glycine N-acyltransferase-like protein (296 aa).

Residue Lys41 is modified to N6-acetyllysine; alternate. N6-succinyllysine; alternate is present on Lys41. Lys43 bears the N6-acetyllysine mark. Position 48 is an N6-acetyllysine; alternate (Lys48). The residue at position 48 (Lys48) is an N6-succinyllysine; alternate. N6-acetyllysine occurs at positions 80 and 83. Residues Lys183 and Lys256 each carry the N6-acetyllysine; alternate modification. An N6-succinyllysine; alternate mark is found at Lys183 and Lys256.

It belongs to the glycine N-acyltransferase family.

The protein localises to the mitochondrion. It carries out the reaction an acyl-CoA + glycine = an N-acylglycine + CoA + H(+). In terms of biological role, mitochondrial acyltransferase which transfers the acyl group to the N-terminus of glycine. Can conjugate a multitude of substrates to form a variety of N-acylglycines. This Mus musculus (Mouse) protein is Glycine N-acyltransferase-like protein (Gm4952).